The following is a 120-amino-acid chain: Spermidine export protein MdtJ (120 aa).

A run of 4 helical transmembrane segments spans residues 1–21, 31–51, 54–74, and 81–101; these read MFYW…TLSM, AGFI…SFAV, IALG…ITIF, and EALS…IVLI.

Belongs to the drug/metabolite transporter (DMT) superfamily. Small multidrug resistance (SMR) (TC 2.A.7.1) family. MdtJ subfamily. Forms a complex with MdtI.

It localises to the cell inner membrane. Catalyzes the excretion of spermidine. This chain is Spermidine export protein MdtJ, found in Salmonella paratyphi A (strain ATCC 9150 / SARB42).